Here is a 670-residue protein sequence, read N- to C-terminus: Sodium/potassium/calcium exchanger 2 (670 aa).

The Cytoplasmic portion of the chain corresponds to 1–38 (MDLHQSATVRLLQEWCSHESPSGCRRHYNTRKKLKLIR). The chain crosses the membrane as a helical span at residues 39–59 (VIGLVMGLVAVSTVPFSISAF). Residues 60-133 (TETYSQNNRG…DVFSLEERRK (74 aa)) lie on the Extracellular side of the membrane. Disordered regions lie at residues 67 to 86 (NRGEASDVTGPRAAPGHRQR) and 91 to 122 (LNDKIRDYTPQPPASQEDRSENGTDHAQGDYP). The segment covering 106-122 (QEDRSENGTDHAQGDYP) has biased composition (basic and acidic residues). N-linked (GlcNAc...) asparagine glycosylation is present at N112. Residues 134-154 (GAIILHVIGMIYMFIALAIVC) traverse the membrane as a helical segment. The Cytoplasmic portion of the chain corresponds to 155 to 179 (DEFFVPSLTVITEKLGISDDVAGAT). One copy of the Alpha-1 repeat lies at 175–215 (VAGATFMAAGGSAPELFTSLIGVFIAHSNVGIGTIVGSAVF). A helical transmembrane segment spans residues 180–200 (FMAAGGSAPELFTSLIGVFIA). Residues 201 to 205 (HSNVG) lie on the Extracellular side of the membrane. Residues 206-226 (IGTIVGSAVFNILFVIGMCAL) traverse the membrane as a helical segment. Residues 227 to 244 (FSREILNLTWWPLFRDVS) are Cytoplasmic-facing. Residues 245-265 (FYIVDLIMLIIFFLDNVIMWW) traverse the membrane as a helical segment. A topological domain (extracellular) is located at residue E266. A helical membrane pass occupies residues 267 to 287 (SLLLLTAYFAYVVFMKFNVQV). The Cytoplasmic segment spans residues 288 to 506 (ERWVKQMINR…PDVRKPASKK (219 aa)). The segment at 312–335 (ASTAGDKEEPTLPNKPRLQRGGSS) is disordered. 2 positions are modified to phosphoserine: S337 and S341. Disordered stretches follow at residues 394-414 (KCQVDENERQNGAANHVDYAA) and 450-471 (AADAPQATETAEEDDDQPLSLS). The chain crosses the membrane as a helical span at residues 507 to 527 (FFPITFFGSITWIAVFSYLMV). Over 528 to 542 (WWAHQVGETIGISEE) the chain is Extracellular. Residues 543 to 563 (IMGLTILAAGTSIPDLITSVI) traverse the membrane as a helical segment. The Alpha-2 repeat unit spans residues 550 to 581 (AAGTSIPDLITSVIVARKGLGDMAVSSSVGSN). The Cytoplasmic portion of the chain corresponds to 564 to 578 (VARKGLGDMAVSSSV). Residues 579 to 599 (GSNIFDITVGLPLPWLLYTII) traverse the membrane as a helical segment. The Extracellular segment spans residues 600–611 (HRFKPVTVSSNG). The helical transmembrane segment at 612 to 632 (LFCAIVLLFIMLIFVILSIAL) threads the bilayer. Topologically, residues 633-639 (CKWRMNK) are cytoplasmic. A helical membrane pass occupies residues 640 to 660 (ILGFIMFGLYFAFLVVSVLLE). Residues 661-670 (DKVLECPVSI) are Extracellular-facing.

The protein belongs to the Ca(2+):cation antiporter (CaCA) (TC 2.A.19) family. SLC24A subfamily. Expressed abundantly in all regions of the brain and weakly in the eye, large intestine and adrenal tissue.

Its subcellular location is the cell membrane. It catalyses the reaction Ca(2+)(out) + K(+)(out) + 4 Na(+)(in) = Ca(2+)(in) + K(+)(in) + 4 Na(+)(out). Calcium, potassium:sodium antiporter that transports 1 Ca(2+) and 1 K(+) in exchange for 4 Na(+). Required for learming and memory by regulating neuronal Ca(2+), which is essential for the development of synaptic plasticity. This is Sodium/potassium/calcium exchanger 2 (Slc24a2) from Rattus norvegicus (Rat).